The primary structure comprises 179 residues: NAD(P)H-quinone oxidoreductase subunit 6, chloroplastic (179 aa).

5 helical membrane-spanning segments follow: residues 8 to 28 (ITLF…VFFN), 30 to 50 (IIYS…LYLL), 58 to 78 (VAQV…AIML), 98 to 118 (SFCV…TTPW), and 150 to 170 (VLPF…AVII).

Belongs to the complex I subunit 6 family. NDH is composed of at least 16 different subunits, 5 of which are encoded in the nucleus.

It is found in the plastid. Its subcellular location is the chloroplast thylakoid membrane. The enzyme catalyses a plastoquinone + NADH + (n+1) H(+)(in) = a plastoquinol + NAD(+) + n H(+)(out). It catalyses the reaction a plastoquinone + NADPH + (n+1) H(+)(in) = a plastoquinol + NADP(+) + n H(+)(out). Functionally, NDH shuttles electrons from NAD(P)H:plastoquinone, via FMN and iron-sulfur (Fe-S) centers, to quinones in the photosynthetic chain and possibly in a chloroplast respiratory chain. The immediate electron acceptor for the enzyme in this species is believed to be plastoquinone. Couples the redox reaction to proton translocation, and thus conserves the redox energy in a proton gradient. In Chaetosphaeridium globosum (Charophycean green alga), this protein is NAD(P)H-quinone oxidoreductase subunit 6, chloroplastic (ndhG).